The sequence spans 296 residues: Light-independent protochlorophyllide reductase iron-sulfur ATP-binding protein (296 aa).

ATP is bound by residues 39–44 (GIGKST) and K68. S43 contacts Mg(2+). Residues C124 and C158 each coordinate [4Fe-4S] cluster. 209 to 210 (NR) serves as a coordination point for ATP.

The protein belongs to the NifH/BchL/ChlL family. In terms of assembly, homodimer. Protochlorophyllide reductase is composed of three subunits; ChlL, ChlN and ChlB. [4Fe-4S] cluster is required as a cofactor.

It carries out the reaction chlorophyllide a + oxidized 2[4Fe-4S]-[ferredoxin] + 2 ADP + 2 phosphate = protochlorophyllide a + reduced 2[4Fe-4S]-[ferredoxin] + 2 ATP + 2 H2O. Its pathway is porphyrin-containing compound metabolism; chlorophyll biosynthesis (light-independent). Its function is as follows. Component of the dark-operative protochlorophyllide reductase (DPOR) that uses Mg-ATP and reduced ferredoxin to reduce ring D of protochlorophyllide (Pchlide) to form chlorophyllide a (Chlide). This reaction is light-independent. The L component serves as a unique electron donor to the NB-component of the complex, and binds Mg-ATP. The protein is Light-independent protochlorophyllide reductase iron-sulfur ATP-binding protein of Prochlorococcus marinus (strain MIT 9313).